Consider the following 200-residue polypeptide: Nucleoplasmin (200 aa).

A2 bears the N-acetylalanine mark. S3 is subject to Phosphoserine. T4 carries the post-translational modification Phosphothreonine. A Phosphoserine modification is found at S6. T8 is modified (phosphothreonine). An acidic tract A1 region spans residues 35 to 39 (EDDEE). The segment covering 123 to 148 (DYSWAEEEDEGEAEGEEEEEEEEDQE) has biased composition (acidic residues). Residues 123 to 200 (DYSWAEEEDE…GRGRKPAAKK (78 aa)) form a disordered region. Residues 128–148 (EEEDEGEAEGEEEEEEEEDQE) are acidic tract A2. A Phosphoserine modification is found at S149. Basic residues predominate over residues 153–170 (AVKRPAATKKAGQAKKKK). The Bipartite nuclear localization signal signature appears at 155–170 (KRPAATKKAGQAKKKK). The segment at 174–176 (EDE) is acidic tract A3. Residues S177, S178, and S182 each carry the phosphoserine modification. A compositionally biased stretch (basic residues) spans 185–200 (KKGKGAGRGRKPAAKK). The residue at position 192 (R192) is an Omega-N-methylarginine; by PRMT5; alternate. The residue at position 192 (R192) is a Symmetric dimethylarginine; by PRMT5; alternate.

It belongs to the nucleoplasmin family. Homopentamer, when bound to H2A-H2B dimers only. Homodecamer of two stacked pentamers, when bound to H2A-H2B dimers and H3-H4 tetramers simultaneously. Interacts with the heterotetramer formed by wdr77 and prmt5. Post-translationally, activated by phosphorylation of multiple serine/threonine residues, along both core and tail domains. The level of phosphorylation gradually increases during egg maturation, reaching an average of 7-10 phosphates per monomer, so that at the time of fertilization the activity of the protein is maximum. Methylated by prmt5, yielding both monomethylated and symmetrically dimethylated Arg-192.

It is found in the nucleus. Acts as a chaperone for histones, such as histone H2A-H2B, and thus regulates the assembly of nucleosome cores. Involved in chromatin remodeling, especially during fertilization and early embryonic development. May be involved in sperm chromatin decondensation during fertilization. In Xenopus laevis (African clawed frog), this protein is Nucleoplasmin.